The following is a 104-amino-acid chain: Large ribosomal subunit protein bL21 (104 aa).

The protein belongs to the bacterial ribosomal protein bL21 family. Part of the 50S ribosomal subunit. Contacts protein L20.

This protein binds to 23S rRNA in the presence of protein L20. The chain is Large ribosomal subunit protein bL21 from Agrobacterium fabrum (strain C58 / ATCC 33970) (Agrobacterium tumefaciens (strain C58)).